The primary structure comprises 692 residues: Glycine--tRNA ligase beta subunit (692 aa).

The protein belongs to the class-II aminoacyl-tRNA synthetase family. In terms of assembly, tetramer of two alpha and two beta subunits.

Its subcellular location is the cytoplasm. It carries out the reaction tRNA(Gly) + glycine + ATP = glycyl-tRNA(Gly) + AMP + diphosphate. This chain is Glycine--tRNA ligase beta subunit, found in Limosilactobacillus fermentum (strain NBRC 3956 / LMG 18251) (Lactobacillus fermentum).